The chain runs to 212 residues: Maleylpyruvate isomerase (212 aa).

Positions 1–80 (MKLYNFWRSG…WLEEQYPTPA (80 aa)) constitute a GST N-terminal domain. Residues 9–11 (SGT), H38, V52, 64–65 (QS), 102–104 (DIH), 108–110 (NRR), and R176 contribute to the glutathione site. In terms of domain architecture, GST C-terminal spans 85 to 212 (DADGRQRVRA…AAPAAQPDSA (128 aa)).

It belongs to the GST superfamily. Zeta family. As to quaternary structure, homodimer. The cofactor is glutathione.

It carries out the reaction 3-maleylpyruvate = 3-fumarylpyruvate. It functions in the pathway aromatic compound metabolism; naphthalene degradation. In terms of biological role, catalyzes the GSH-dependent isomerization of maleylpyruvate to fumarylpyruvate which is subsequently processed by NagK to form pyruvate and fumarate. In Ralstonia sp, this protein is Maleylpyruvate isomerase.